Here is a 321-residue protein sequence, read N- to C-terminus: Torsin-2A (321 aa).

An N-terminal signal peptide occupies residues 1 to 27 (MAVARHGCPPWGSILGLLVLALAAAAA). 93–100 (GWTGTGKS) provides a ligand contact to ATP. The N-linked (GlcNAc...) asparagine glycan is linked to asparagine 149.

This sequence belongs to the ClpA/ClpB family. Torsin subfamily. In terms of assembly, homohexamer. Interacts with TOR1AIP1.

It localises to the endoplasmic reticulum lumen. The sequence is that of Torsin-2A (Tor2a) from Rattus norvegicus (Rat).